The chain runs to 576 residues: K(+)/H(+) antiporter NhaP2 (576 aa).

13 consecutive transmembrane segments (helical) span residues 6–26 (INSF…LSPM), 34–54 (ILLI…GGIL), 58–78 (YSTA…DGGM), 87–107 (VALW…TSIT), 109–129 (MMAA…GAIV), 163–183 (PMAV…DTEM), 185–205 (FSFM…LGLG), 219–239 (LADG…YAAS), 242–262 (LGGS…NKPT), 271–291 (VLDG…GLLL), 299–319 (ILIP…PVAV), 335–355 (WFIS…VFPM), and 359–379 (LPGA…SLLV). Residues 405–486 (SGVEIYPSSE…LEALSNLFSQ (82 aa)) form the RCK C-terminal domain.

The protein belongs to the monovalent cation:proton antiporter 1 (CPA1) transporter (TC 2.A.36) family. NhaP2 subfamily.

The protein resides in the cell inner membrane. It carries out the reaction K(+)(in) + H(+)(out) = K(+)(out) + H(+)(in). K(+)/H(+) antiporter that extrudes potassium in exchange for external protons and maintains the internal concentration of potassium under toxic levels. This chain is K(+)/H(+) antiporter NhaP2, found in Shewanella baltica (strain OS223).